Reading from the N-terminus, the 246-residue chain is 3-deoxy-manno-octulosonate cytidylyltransferase (246 aa).

It belongs to the KdsB family.

It localises to the cytoplasm. The enzyme catalyses 3-deoxy-alpha-D-manno-oct-2-ulosonate + CTP = CMP-3-deoxy-beta-D-manno-octulosonate + diphosphate. The protein operates within nucleotide-sugar biosynthesis; CMP-3-deoxy-D-manno-octulosonate biosynthesis; CMP-3-deoxy-D-manno-octulosonate from 3-deoxy-D-manno-octulosonate and CTP: step 1/1. It participates in bacterial outer membrane biogenesis; lipopolysaccharide biosynthesis. Activates KDO (a required 8-carbon sugar) for incorporation into bacterial lipopolysaccharide in Gram-negative bacteria. The protein is 3-deoxy-manno-octulosonate cytidylyltransferase of Leptospira borgpetersenii serovar Hardjo-bovis (strain JB197).